Consider the following 252-residue polypeptide: 2-succinyl-6-hydroxy-2,4-cyclohexadiene-1-carboxylate synthase (252 aa).

Belongs to the AB hydrolase superfamily. MenH family. As to quaternary structure, monomer.

The enzyme catalyses 5-enolpyruvoyl-6-hydroxy-2-succinyl-cyclohex-3-ene-1-carboxylate = (1R,6R)-6-hydroxy-2-succinyl-cyclohexa-2,4-diene-1-carboxylate + pyruvate. It functions in the pathway quinol/quinone metabolism; 1,4-dihydroxy-2-naphthoate biosynthesis; 1,4-dihydroxy-2-naphthoate from chorismate: step 3/7. Its pathway is quinol/quinone metabolism; menaquinone biosynthesis. In terms of biological role, catalyzes a proton abstraction reaction that results in 2,5-elimination of pyruvate from 2-succinyl-5-enolpyruvyl-6-hydroxy-3-cyclohexene-1-carboxylate (SEPHCHC) and the formation of 2-succinyl-6-hydroxy-2,4-cyclohexadiene-1-carboxylate (SHCHC). This Escherichia coli O9:H4 (strain HS) protein is 2-succinyl-6-hydroxy-2,4-cyclohexadiene-1-carboxylate synthase.